The primary structure comprises 348 residues: Fructose-1,6-bisphosphatase class 1 (348 aa).

E92, D111, L113, and D114 together coordinate Mg(2+). Substrate contacts are provided by residues 114-117 (DGSS) and N204. Residue E276 coordinates Mg(2+).

Belongs to the FBPase class 1 family. In terms of assembly, homotetramer. Mg(2+) serves as cofactor.

The protein resides in the cytoplasm. It catalyses the reaction beta-D-fructose 1,6-bisphosphate + H2O = beta-D-fructose 6-phosphate + phosphate. Its pathway is carbohydrate biosynthesis; gluconeogenesis. In Methylorubrum extorquens (strain CM4 / NCIMB 13688) (Methylobacterium extorquens), this protein is Fructose-1,6-bisphosphatase class 1.